Reading from the N-terminus, the 394-residue chain is Putative pectate lyase 17 (394 aa).

A signal peptide spans 1–22 (MTHFTVSCLLVALFLCQSLVHA). 3 residues coordinate Ca(2+): Asp192, Asp216, and Asp220. Residue Arg272 is part of the active site.

It belongs to the polysaccharide lyase 1 family. Requires Ca(2+) as cofactor.

The enzyme catalyses Eliminative cleavage of (1-&gt;4)-alpha-D-galacturonan to give oligosaccharides with 4-deoxy-alpha-D-galact-4-enuronosyl groups at their non-reducing ends.. It participates in glycan metabolism; pectin degradation; 2-dehydro-3-deoxy-D-gluconate from pectin: step 2/5. This Arabidopsis thaliana (Mouse-ear cress) protein is Putative pectate lyase 17.